A 357-amino-acid chain; its full sequence is Peptide chain release factor 1 (357 aa).

Residue Q234 is modified to N5-methylglutamine.

It belongs to the prokaryotic/mitochondrial release factor family. Methylated by PrmC. Methylation increases the termination efficiency of RF1.

It is found in the cytoplasm. In terms of biological role, peptide chain release factor 1 directs the termination of translation in response to the peptide chain termination codons UAG and UAA. The protein is Peptide chain release factor 1 of Chlorobaculum tepidum (strain ATCC 49652 / DSM 12025 / NBRC 103806 / TLS) (Chlorobium tepidum).